A 1058-amino-acid chain; its full sequence is Carbamoyl phosphate synthase large chain (1058 aa).

Positions 1–401 (MPKRTDIQKI…SLLKACRSLE (401 aa)) are carboxyphosphate synthetic domain. ATP contacts are provided by Arg-129, Arg-169, Gly-175, Gly-176, Arg-208, Ile-210, Glu-215, Gly-241, Ile-242, His-243, Gln-284, and Glu-298. Positions 133–327 (KQLMEELEQP…IAKLAAKIAV (195 aa)) constitute an ATP-grasp 1 domain. Mg(2+) contacts are provided by Gln-284, Glu-298, and Asn-300. Mn(2+)-binding residues include Gln-284, Glu-298, and Asn-300. The oligomerization domain stretch occupies residues 402–546 (IGVHHNEIPE…YSTYGWENES (145 aa)). A carbamoyl phosphate synthetic domain region spans residues 547–929 (IRSDKESVLV…ALYKAFEASY (383 aa)). Positions 671 to 861 (EQALKELDIP…MAQVATKLIL (191 aa)) constitute an ATP-grasp 2 domain. ATP-binding residues include Arg-707, Ser-746, Ile-748, Glu-752, Gly-777, Val-778, His-779, Ser-780, Gln-820, and Glu-832. 3 residues coordinate Mg(2+): Gln-820, Glu-832, and Asn-834. Positions 820, 832, and 834 each coordinate Mn(2+). In terms of domain architecture, MGS-like spans 930–1058 (LHLPTFGNVV…ESRSFVTEAI (129 aa)). The segment at 930-1058 (LHLPTFGNVV…ESRSFVTEAI (129 aa)) is allosteric domain.

Belongs to the CarB family. Composed of two chains; the small (or glutamine) chain promotes the hydrolysis of glutamine to ammonia, which is used by the large (or ammonia) chain to synthesize carbamoyl phosphate. Tetramer of heterodimers (alpha,beta)4. The cofactor is Mg(2+). Mn(2+) serves as cofactor.

The enzyme catalyses hydrogencarbonate + L-glutamine + 2 ATP + H2O = carbamoyl phosphate + L-glutamate + 2 ADP + phosphate + 2 H(+). It catalyses the reaction hydrogencarbonate + NH4(+) + 2 ATP = carbamoyl phosphate + 2 ADP + phosphate + 2 H(+). It participates in amino-acid biosynthesis; L-arginine biosynthesis; carbamoyl phosphate from bicarbonate: step 1/1. Its pathway is pyrimidine metabolism; UMP biosynthesis via de novo pathway; (S)-dihydroorotate from bicarbonate: step 1/3. In terms of biological role, large subunit of the glutamine-dependent carbamoyl phosphate synthetase (CPSase). CPSase catalyzes the formation of carbamoyl phosphate from the ammonia moiety of glutamine, carbonate, and phosphate donated by ATP, constituting the first step of 2 biosynthetic pathways, one leading to arginine and/or urea and the other to pyrimidine nucleotides. The large subunit (synthetase) binds the substrates ammonia (free or transferred from glutamine from the small subunit), hydrogencarbonate and ATP and carries out an ATP-coupled ligase reaction, activating hydrogencarbonate by forming carboxy phosphate which reacts with ammonia to form carbamoyl phosphate. In Streptococcus pneumoniae serotype 19F (strain G54), this protein is Carbamoyl phosphate synthase large chain.